A 108-amino-acid polypeptide reads, in one-letter code: MVVKSALLFVLAAVLEIGGAWLVWQGFREHRGWLWVGAGVLALGAYGFVAAFQPDANFGRVLAAYGGVFVAGSLIWGMVADGFRPDRWDITGAAVCLLGVVLIMYAPR.

Helical transmembrane passes span 7–27 (LLFVLAAVLEIGGAWLVWQGF), 32–52 (GWLWVGAGVLALGAYGFVAAF), 61–81 (VLAAYGGVFVAGSLIWGMVAD), and 87–107 (RWDITGAAVCLLGVVLIMYAP).

It belongs to the UPF0060 family.

Its subcellular location is the cell membrane. The polypeptide is UPF0060 membrane protein Mflv_3127 (Mycolicibacterium gilvum (strain PYR-GCK) (Mycobacterium gilvum (strain PYR-GCK))).